A 445-amino-acid polypeptide reads, in one-letter code: Trigger factor (445 aa).

The PPIase FKBP-type domain occupies 162-247; that stretch reads GDQVTIDAIG…IKAVHTAEPT (86 aa).

The protein belongs to the FKBP-type PPIase family. Tig subfamily.

The protein resides in the cytoplasm. It carries out the reaction [protein]-peptidylproline (omega=180) = [protein]-peptidylproline (omega=0). Involved in protein export. Acts as a chaperone by maintaining the newly synthesized protein in an open conformation. Functions as a peptidyl-prolyl cis-trans isomerase. The protein is Trigger factor of Rickettsia akari (strain Hartford).